Here is a 151-residue protein sequence, read N- to C-terminus: Transcriptional regulator MraZ (151 aa).

SpoVT-AbrB domains lie at 5–52 and 81–124; these read ANAI…PLSE and AVDL…DEDA.

It belongs to the MraZ family. Forms oligomers.

It is found in the cytoplasm. Its subcellular location is the nucleoid. This chain is Transcriptional regulator MraZ, found in Pseudomonas savastanoi pv. phaseolicola (strain 1448A / Race 6) (Pseudomonas syringae pv. phaseolicola (strain 1448A / Race 6)).